The following is a 533-amino-acid chain: Malate synthase A (533 aa).

Arginine 166 (proton acceptor) is an active-site residue. The active-site Proton donor is aspartate 447.

The protein belongs to the malate synthase family.

The protein localises to the cytoplasm. It catalyses the reaction glyoxylate + acetyl-CoA + H2O = (S)-malate + CoA + H(+). It participates in carbohydrate metabolism; glyoxylate cycle; (S)-malate from isocitrate: step 2/2. The sequence is that of Malate synthase A (aceB) from Escherichia coli (strain K12).